The chain runs to 308 residues: Putative acetyl-hydrolase LipR (308 aa).

Residues 1–40 form the signal peptide; that stretch reads MNLRKNVIRSVLRGARPLFASRRLGIAGRRVLLATLTAGA. Positions 76–78 match the Involved in the stabilization of the negatively charged intermediate by the formation of the oxyanion hole motif; the sequence is HGG. Catalysis depends on residues Ser146, Asp239, and His269.

Belongs to the 'GDXG' lipolytic enzyme family.

Required for maintaining the appropriate mycolic acid composition and permeability of the envelope on its exposure to acidic pH. In Mycobacterium tuberculosis (strain ATCC 25618 / H37Rv), this protein is Putative acetyl-hydrolase LipR (lipR).